Consider the following 90-residue polypeptide: Probable Fe(2+)-trafficking protein (90 aa).

Belongs to the Fe(2+)-trafficking protein family.

Functionally, could be a mediator in iron transactions between iron acquisition and iron-requiring processes, such as synthesis and/or repair of Fe-S clusters in biosynthetic enzymes. In Pasteurella multocida (strain Pm70), this protein is Probable Fe(2+)-trafficking protein.